Here is a 177-residue protein sequence, read N- to C-terminus: Ribulose bisphosphate carboxylase small subunit, chloroplastic (177 aa).

Residues 1 to 55 constitute a chloroplast transit peptide; sequence MASLMSNAAVVTASTAAQANMVAPFSGLKSTSAFPVSRKSNVDITSLATNGGRVN.

It belongs to the RuBisCO small chain family. Heterohexadecamer of 8 large and 8 small subunits.

It localises to the plastid. It is found in the chloroplast. Functionally, ruBisCO catalyzes two reactions: the carboxylation of D-ribulose 1,5-bisphosphate, the primary event in carbon dioxide fixation, as well as the oxidative fragmentation of the pentose substrate. Both reactions occur simultaneously and in competition at the same active site. Although the small subunit is not catalytic it is essential for maximal activity. This is Ribulose bisphosphate carboxylase small subunit, chloroplastic from Silene latifolia subsp. alba (White campion).